We begin with the raw amino-acid sequence, 148 residues long: Large ribosomal subunit protein bL9 (148 aa).

It belongs to the bacterial ribosomal protein bL9 family.

In terms of biological role, binds to the 23S rRNA. In Ruminiclostridium cellulolyticum (strain ATCC 35319 / DSM 5812 / JCM 6584 / H10) (Clostridium cellulolyticum), this protein is Large ribosomal subunit protein bL9.